The primary structure comprises 305 residues: Protein-methionine-sulfoxide reductase catalytic subunit MsrP (305 aa).

The tat-type signal signal peptide spans methionine 1 to alanine 54. Residues asparagine 69, tyrosine 72–glutamate 73, cysteine 126, threonine 161, asparagine 209, arginine 214, and serine 225–lysine 227 each bind Mo-molybdopterin.

The protein belongs to the MsrP family. In terms of assembly, heterodimer of a catalytic subunit (MsrP) and a heme-binding subunit (MsrQ). Requires Mo-molybdopterin as cofactor. Post-translationally, predicted to be exported by the Tat system. The position of the signal peptide cleavage has not been experimentally proven.

Its subcellular location is the periplasm. It carries out the reaction L-methionyl-[protein] + a quinone + H2O = L-methionyl-(S)-S-oxide-[protein] + a quinol. The catalysed reaction is L-methionyl-[protein] + a quinone + H2O = L-methionyl-(R)-S-oxide-[protein] + a quinol. Functionally, part of the MsrPQ system that repairs oxidized periplasmic proteins containing methionine sulfoxide residues (Met-O), using respiratory chain electrons. Thus protects these proteins from oxidative-stress damage caused by reactive species of oxygen and chlorine generated by the host defense mechanisms. MsrPQ is essential for the maintenance of envelope integrity under bleach stress, rescuing a wide series of structurally unrelated periplasmic proteins from methionine oxidation. The catalytic subunit MsrP is non-stereospecific, being able to reduce both (R-) and (S-) diastereoisomers of methionine sulfoxide. The sequence is that of Protein-methionine-sulfoxide reductase catalytic subunit MsrP from Chromobacterium violaceum (strain ATCC 12472 / DSM 30191 / JCM 1249 / CCUG 213 / NBRC 12614 / NCIMB 9131 / NCTC 9757 / MK).